The primary structure comprises 816 residues: Phosphatidylinositol 4-kinase beta (816 aa).

Disordered stretches follow at residues 1 to 28 (MGDTVVAPAPLKPASESTPGPPGNNGGS), 93 to 120 (PPTGIREEDDETEATVASGTAKGARRRR), and 249 to 318 (HRKR…SFSS). Residue Gly-2 is modified to N-acetylglycine. The interval 2–68 (GDTVVAPAPL…VKLSHGGVAS (67 aa)) is interaction with ACBD3. The PIK helical domain occupies 49–242 (QKACQEVLQK…GTKLRRLILS (194 aa)). Position 258 is a phosphoserine (Ser-258). Phosphothreonine is present on Thr-263. Residues Ser-266, Ser-275, Ser-277, Ser-284, Ser-294, Ser-428, and Ser-511 each carry the phosphoserine modification. Residues 278 to 294 (DATASISLSSSLKRTAS) show a composition bias toward low complexity. A phosphothreonine mark is found at Thr-517 and Thr-519. A PI3K/PI4K catalytic domain is found at 535–801 (EPWQEKVRRI…MVDGSMRSIT (267 aa)). A G-loop region spans residues 541-547 (VRRIREG). The catalytic loop stretch occupies residues 668 to 676 (QVKDRHNGN). The activation loop stretch occupies residues 687-711 (HIDFGFILSSSPRNLGFETSAFKLT).

This sequence belongs to the PI3/PI4-kinase family. Type III PI4K subfamily. Interacts with ARF1 and ARF3 in the Golgi complex, but not with ARF4, ARF5 or ARF6. Interacts with NCS1/FREQ in a calcium-independent manner. Interacts with CALN1/CABP8 and CALN2/CABP7; in a calcium-dependent manner; this interaction competes with NCS1/FREQ binding. Interacts with ACBD3. Interacts with ARMH3, YWHAB, YWHAE, YWHAG, YWHAH, YWHAQ, YWHAZ and SFN. Interacts with GGA2 (via VHS domain); the interaction is important for PI4KB location at the Golgi apparatus membrane. Interacts with ATG9A. Requires Mg(2+) as cofactor. It depends on Mn(2+) as a cofactor.

Its subcellular location is the endomembrane system. It localises to the mitochondrion outer membrane. The protein resides in the rough endoplasmic reticulum membrane. The protein localises to the golgi apparatus. It is found in the golgi apparatus membrane. The enzyme catalyses a 1,2-diacyl-sn-glycero-3-phospho-(1D-myo-inositol) + ATP = a 1,2-diacyl-sn-glycero-3-phospho-(1D-myo-inositol 4-phosphate) + ADP + H(+). Inhibited by wortmannin. Increased kinase activity upon interaction with NCS1/FREQ. In terms of biological role, phosphorylates phosphatidylinositol (PI) in the first committed step in the production of the second messenger inositol-1,4,5,-trisphosphate (PIP). May regulate Golgi disintegration/reorganization during mitosis, possibly via its phosphorylation. Involved in Golgi-to-plasma membrane trafficking. May play an important role in the inner ear development. The polypeptide is Phosphatidylinositol 4-kinase beta (PI4KB) (Rhinolophus ferrumequinum (Greater horseshoe bat)).